The following is a 78-amino-acid chain: Large ribosomal subunit protein bL28 (78 aa).

This sequence belongs to the bacterial ribosomal protein bL28 family.

This chain is Large ribosomal subunit protein bL28, found in Proteus mirabilis (strain HI4320).